The primary structure comprises 486 residues: Cardiolipin synthase A (486 aa).

2 helical membrane-spanning segments follow: residues 3–23 and 38–58; these read TFYT…IAGV and MAWL…YLSV. PLD phosphodiesterase domains are found at residues 219–246 and 399–426; these read MDLR…VDPR and EGGL…DMRS. Catalysis depends on residues H224, K226, D231, H404, K406, and D411.

Belongs to the phospholipase D family. Cardiolipin synthase subfamily. ClsA sub-subfamily.

The protein localises to the cell inner membrane. It carries out the reaction 2 a 1,2-diacyl-sn-glycero-3-phospho-(1'-sn-glycerol) = a cardiolipin + glycerol. Functionally, catalyzes the reversible phosphatidyl group transfer from one phosphatidylglycerol molecule to another to form cardiolipin (CL) (diphosphatidylglycerol) and glycerol. In Salmonella paratyphi A (strain ATCC 9150 / SARB42), this protein is Cardiolipin synthase A.